A 365-amino-acid polypeptide reads, in one-letter code: uncharacterized protein (365 aa).

The protein belongs to the mycobacterial PPE family.

This is an uncharacterized protein from Mycobacterium tuberculosis (strain ATCC 25618 / H37Rv).